The primary structure comprises 451 residues: Lipase member H (451 aa).

The N-terminal stretch at M1–S16 is a signal peptide. Residue N66 is glycosylated (N-linked (GlcNAc...) asparagine). S154 (nucleophile) is an active-site residue. The active-site Charge relay system is the D178. Residues C233 and C246 are joined by a disulfide bond. H248 functions as the Charge relay system in the catalytic mechanism. 3 disulfides stabilise this stretch: C270–C281, C284–C292, and C427–C446.

This sequence belongs to the AB hydrolase superfamily. Lipase family. Interacts with TTMP/C3orf52.

It localises to the secreted. The protein localises to the cell membrane. It catalyses the reaction 1-hexadecanoyl-2-(9Z-octadecenoyl)-sn-glycero-3-phosphate + H2O = 2-(9Z-octadecenoyl)-sn-glycero-3-phosphate + hexadecanoate + H(+). Its function is as follows. Hydrolyzes specifically phosphatidic acid (PA) to produce 2-acyl lysophosphatidic acid (LPA; a potent bioactive lipid mediator) and fatty acid. Does not hydrolyze other phospholipids, like phosphatidylserine (PS), phosphatidylcholine (PC) and phosphatidylethanolamine (PE) or triacylglycerol (TG). The protein is Lipase member H (Liph) of Rattus norvegicus (Rat).